The chain runs to 189 residues: Selenoprotein S (189 aa).

A helical transmembrane segment spans residues Ser28 to Phe48. Residues Arg78–Gln90 are VCP/p97-interacting motif (VIM). Residues Lys115–Gly189 are disordered. Ser140 bears the Phosphoserine mark. The span at Arg159–Ala173 shows a compositional bias: gly residues. A non-standard amino acid (selenocysteine) is located at residue Sec188.

Belongs to the selenoprotein S family. As to quaternary structure, interacts with DERL1 and (via VIM motif) with VCP, suggesting that it forms a membrane complex with DERL1 that serves as a receptor for VCP. Also interacts with DERL2, DERL3 and SELENOK. The SELENOK-SELENOS complex interacts with VCP. Interacts with CCDC47. Post-translationally, truncated SELENOS proteins produced by failed UGA/Sec decoding are ubiquitinated by the CRL2(KLHDC2) and CRL2(KLHDC3) complexes, which recognizes the glycine (Gly) at the C-terminus of truncated SELENOS proteins. Truncated SELENOS proteins produced by failed UGA/Sec decoding are also ubiquitinated by the CRL5(KLHDC1) complex.

It localises to the endoplasmic reticulum membrane. The protein resides in the cytoplasm. In terms of biological role, involved in the degradation process of misfolded endoplasmic reticulum (ER) luminal proteins. Participates in the transfer of misfolded proteins from the ER to the cytosol, where they are destroyed by the proteasome in a ubiquitin-dependent manner. Probably acts by serving as a linker between DERL1, which mediates the retrotranslocation of misfolded proteins into the cytosol, and the ATPase complex VCP, which mediates the translocation and ubiquitination. The protein is Selenoprotein S of Homo sapiens (Human).